A 111-amino-acid chain; its full sequence is Small ribosomal subunit protein bS16 (111 aa).

It belongs to the bacterial ribosomal protein bS16 family.

This chain is Small ribosomal subunit protein bS16, found in Rickettsia canadensis (strain McKiel).